Here is a 92-residue protein sequence, read N- to C-terminus: Precursor of elicitor peptide 1 (92 aa).

Residues 1-69 (MEKSDRRSEE…EKEEVVVTSR (69 aa)) constitute a propeptide that is removed on maturation. The segment at 35–92 (HQDSPTTSSPGTSKQPKEEKEDVTMEKEEVVVTSRATKVKAKQRGKEKVSSGRPGQHN) is disordered. Polar residues predominate over residues 37-48 (DSPTTSSPGTSK). Residues 49-64 (QPKEEKEDVTMEKEEV) are compositionally biased toward basic and acidic residues.

Belongs to the brassicaceae elicitor peptide family. In terms of assembly, interacts with its receptor PEPR1.

Its function is as follows. Elicitor of plant defense. Induces the production of plant defensin (PDF1.2) and of H(2)O(2). Promotes resistance to the root fungal pathogen P.irregulare. Triggers the expression of several PROSCOOP genes (e.g. PROSCOOP2, PROSCOOP7, PROSCOOP8, PROSCOOP12 and PROSCOOP13). The polypeptide is Precursor of elicitor peptide 1 (Arabidopsis thaliana (Mouse-ear cress)).